The primary structure comprises 382 residues: Queuine tRNA-ribosyltransferase (382 aa).

D89 (proton acceptor) is an active-site residue. Substrate-binding positions include 89–93 (DSGGF), D143, Q187, and G214. Residues 245–251 (GVGKPED) form an RNA binding region. The active-site Nucleophile is D264. Residues 269 to 273 (TRNAR) form an RNA binding; important for wobble base 34 recognition region. Zn(2+) is bound by residues C302, C304, C307, and H333.

The protein belongs to the queuine tRNA-ribosyltransferase family. In terms of assembly, homodimer. Within each dimer, one monomer is responsible for RNA recognition and catalysis, while the other monomer binds to the replacement base PreQ1. Zn(2+) serves as cofactor.

The catalysed reaction is 7-aminomethyl-7-carbaguanine + guanosine(34) in tRNA = 7-aminomethyl-7-carbaguanosine(34) in tRNA + guanine. It functions in the pathway tRNA modification; tRNA-queuosine biosynthesis. Functionally, catalyzes the base-exchange of a guanine (G) residue with the queuine precursor 7-aminomethyl-7-deazaguanine (PreQ1) at position 34 (anticodon wobble position) in tRNAs with GU(N) anticodons (tRNA-Asp, -Asn, -His and -Tyr). Catalysis occurs through a double-displacement mechanism. The nucleophile active site attacks the C1' of nucleotide 34 to detach the guanine base from the RNA, forming a covalent enzyme-RNA intermediate. The proton acceptor active site deprotonates the incoming PreQ1, allowing a nucleophilic attack on the C1' of the ribose to form the product. After dissociation, two additional enzymatic reactions on the tRNA convert PreQ1 to queuine (Q), resulting in the hypermodified nucleoside queuosine (7-(((4,5-cis-dihydroxy-2-cyclopenten-1-yl)amino)methyl)-7-deazaguanosine). In Sodalis glossinidius (strain morsitans), this protein is Queuine tRNA-ribosyltransferase.